A 335-amino-acid chain; its full sequence is Biotin synthase (335 aa).

The Radical SAM core domain maps to 51–278 (NTVQLSSLLS…LAKVRLSAGR (228 aa)). [4Fe-4S] cluster-binding residues include cysteine 66, cysteine 70, and cysteine 73. 4 residues coordinate [2Fe-2S] cluster: cysteine 110, cysteine 141, cysteine 201, and arginine 273.

The protein belongs to the radical SAM superfamily. Biotin synthase family. As to quaternary structure, homodimer. Requires [4Fe-4S] cluster as cofactor. [2Fe-2S] cluster is required as a cofactor.

The enzyme catalyses (4R,5S)-dethiobiotin + (sulfur carrier)-SH + 2 reduced [2Fe-2S]-[ferredoxin] + 2 S-adenosyl-L-methionine = (sulfur carrier)-H + biotin + 2 5'-deoxyadenosine + 2 L-methionine + 2 oxidized [2Fe-2S]-[ferredoxin]. It participates in cofactor biosynthesis; biotin biosynthesis; biotin from 7,8-diaminononanoate: step 2/2. In terms of biological role, catalyzes the conversion of dethiobiotin (DTB) to biotin by the insertion of a sulfur atom into dethiobiotin via a radical-based mechanism. The protein is Biotin synthase of Bordetella pertussis (strain Tohama I / ATCC BAA-589 / NCTC 13251).